The following is a 124-amino-acid chain: Splicing factor 3B subunit 6-like protein (124 aa).

The segment at glutamate 16–asparagine 29 is interaction with pre-mRNA branch site. An RRM domain is found at arginine 19–histidine 94.

The protein localises to the nucleus. Functionally, may be necessary for the splicing of pre-mRNA. The sequence is that of Splicing factor 3B subunit 6-like protein from Arabidopsis thaliana (Mouse-ear cress).